We begin with the raw amino-acid sequence, 404 residues long: Cysteine desulfurase IscS (404 aa).

Residues 75-76 (AT), Asn-155, Gln-183, and 203-205 (SGH) each bind pyridoxal 5'-phosphate. At Lys-206 the chain carries N6-(pyridoxal phosphate)lysine. Thr-243 is a binding site for pyridoxal 5'-phosphate. Cys-328 serves as the catalytic Cysteine persulfide intermediate. Cys-328 is a [2Fe-2S] cluster binding site.

This sequence belongs to the class-V pyridoxal-phosphate-dependent aminotransferase family. NifS/IscS subfamily. As to quaternary structure, homodimer. Forms a heterotetramer with IscU, interacts with other sulfur acceptors. It depends on pyridoxal 5'-phosphate as a cofactor.

It is found in the cytoplasm. The enzyme catalyses (sulfur carrier)-H + L-cysteine = (sulfur carrier)-SH + L-alanine. It functions in the pathway cofactor biosynthesis; iron-sulfur cluster biosynthesis. In terms of biological role, master enzyme that delivers sulfur to a number of partners involved in Fe-S cluster assembly, tRNA modification or cofactor biosynthesis. Catalyzes the removal of elemental sulfur and selenium atoms from cysteine and selenocysteine to produce alanine. Functions as a sulfur delivery protein for Fe-S cluster synthesis onto IscU, an Fe-S scaffold assembly protein, as well as other S acceptor proteins. Also functions as a selenium delivery protein in the pathway for the biosynthesis of selenophosphate. The polypeptide is Cysteine desulfurase IscS (Salmonella gallinarum (strain 287/91 / NCTC 13346)).